We begin with the raw amino-acid sequence, 712 residues long: Polyribonucleotide nucleotidyltransferase (712 aa).

Mg(2+) contacts are provided by D487 and D493. One can recognise a KH domain in the interval 554–613 (PRIEVMNIPVDKIREVIGSGGKVIREIVEKTGAKINIEDDGTVKIASSSGKEIEAARKWI). The S1 motif domain occupies 623 to 691 (GQIYEGTVVK…ERGKVRLSMK (69 aa)).

It belongs to the polyribonucleotide nucleotidyltransferase family. It depends on Mg(2+) as a cofactor.

It is found in the cytoplasm. It carries out the reaction RNA(n+1) + phosphate = RNA(n) + a ribonucleoside 5'-diphosphate. Involved in mRNA degradation. Catalyzes the phosphorolysis of single-stranded polyribonucleotides processively in the 3'- to 5'-direction. The chain is Polyribonucleotide nucleotidyltransferase from Rhizobium leguminosarum bv. trifolii (strain WSM2304).